A 127-amino-acid polypeptide reads, in one-letter code: Probable soluble cytochrome b562 1 (127 aa).

The first 21 residues, 1 to 21 (MRKIPIIAGVFSLLITSCTFA), serve as a signal peptide directing secretion. 2 residues coordinate heme b: Met28 and His123.

Belongs to the cytochrome b562 family. The cofactor is heme b.

Its subcellular location is the periplasm. Its function is as follows. Electron-transport protein of unknown function. In Yersinia pestis, this protein is Probable soluble cytochrome b562 1 (cybC1).